We begin with the raw amino-acid sequence, 429 residues long: Glucose-1-phosphate adenylyltransferase (429 aa).

Residues Gly162, Glu177–Lys178, and Ser209 contribute to the alpha-D-glucose 1-phosphate site.

The protein belongs to the bacterial/plant glucose-1-phosphate adenylyltransferase family. In terms of assembly, homotetramer.

The catalysed reaction is alpha-D-glucose 1-phosphate + ATP + H(+) = ADP-alpha-D-glucose + diphosphate. It participates in glycan biosynthesis; glycogen biosynthesis. Its activity is regulated as follows. Activated by 3-phosphoglycerate and inhibited by phosphate. In terms of biological role, involved in the biosynthesis of ADP-glucose, a building block required for the elongation reactions to produce glycogen. Catalyzes the reaction between ATP and alpha-D-glucose 1-phosphate (G1P) to produce pyrophosphate and ADP-Glc. This is Glucose-1-phosphate adenylyltransferase from Nostoc sp. (strain PCC 7120 / SAG 25.82 / UTEX 2576).